We begin with the raw amino-acid sequence, 503 residues long: GMP synthase [glutamine-hydrolyzing] (503 aa).

The region spanning 1–178 (MREANVYSEI…LHRAAGIPAD (178 aa)) is the Glutamine amidotransferase type-1 domain. The Nucleophile role is filled by C60. Residues H152 and E154 contribute to the active site. Residues 179–377 (WNSGNVIADQ…LGLPEVIVGR (199 aa)) enclose the GMPS ATP-PPase domain. 206–212 (SGGVDSA) serves as a coordination point for ATP.

Homodimer.

It carries out the reaction XMP + L-glutamine + ATP + H2O = GMP + L-glutamate + AMP + diphosphate + 2 H(+). It participates in purine metabolism; GMP biosynthesis; GMP from XMP (L-Gln route): step 1/1. Functionally, catalyzes the synthesis of GMP from XMP. This chain is GMP synthase [glutamine-hydrolyzing], found in Leifsonia xyli subsp. xyli (strain CTCB07).